The following is a 270-amino-acid chain: Tryptophan synthase alpha chain (270 aa).

Active-site proton acceptor residues include Glu-49 and Asp-60.

This sequence belongs to the TrpA family. In terms of assembly, tetramer of two alpha and two beta chains.

The enzyme catalyses (1S,2R)-1-C-(indol-3-yl)glycerol 3-phosphate + L-serine = D-glyceraldehyde 3-phosphate + L-tryptophan + H2O. It participates in amino-acid biosynthesis; L-tryptophan biosynthesis; L-tryptophan from chorismate: step 5/5. Functionally, the alpha subunit is responsible for the aldol cleavage of indoleglycerol phosphate to indole and glyceraldehyde 3-phosphate. This Gluconobacter oxydans (strain 621H) (Gluconobacter suboxydans) protein is Tryptophan synthase alpha chain.